Reading from the N-terminus, the 507-residue chain is Glycerol kinase 2 (507 aa).

ADP is bound at residue T16. Residues T16, T17, and S18 each coordinate ATP. T16 contributes to the sn-glycerol 3-phosphate binding site. R20 serves as a coordination point for ADP. Sn-glycerol 3-phosphate-binding residues include R86, E87, Y138, and D248. Residues R86, E87, Y138, D248, and Q249 each coordinate glycerol. The ADP site is built by T270 and G314. ATP contacts are provided by T270, G314, Q318, and G415. ADP contacts are provided by G415 and N419.

This sequence belongs to the FGGY kinase family.

The catalysed reaction is glycerol + ATP = sn-glycerol 3-phosphate + ADP + H(+). It functions in the pathway polyol metabolism; glycerol degradation via glycerol kinase pathway; sn-glycerol 3-phosphate from glycerol: step 1/1. Inhibited by fructose 1,6-bisphosphate (FBP). In terms of biological role, key enzyme in the regulation of glycerol uptake and metabolism. Catalyzes the phosphorylation of glycerol to yield sn-glycerol 3-phosphate. The chain is Glycerol kinase 2 from Streptomyces avermitilis (strain ATCC 31267 / DSM 46492 / JCM 5070 / NBRC 14893 / NCIMB 12804 / NRRL 8165 / MA-4680).